A 441-amino-acid polypeptide reads, in one-letter code: MNYQDNSLKSLKLGQKTEYASQYDRTLLQPVPRALNRDGLGITQNQPFTIGADIWTAYEISWLNEKGLPQVAIADIYLDYQSQNLIESKSFKLYLNSFNQSKFTDFNAVQQTMQRDLSECAQGDVKVRLNPVAVYDAQKINHLQGDCIDEQDIEITSYEFNANWLKDCVSNEIVEEKLVSHLLKSNCLITNQPDWGTDQAQQAILTARNNKLNFETQRKTAEQTLRNLLNLKPNEALNITFPHIMNVKTAGVNLNVPVSVIANRPDVKAAQFRLSSAFKNAKATQKSWFPEVNLGASLSSTASTVGTALHNPVAAGTVGISLPFLNWNTVKWNVKISEADYETARLNYEQRITTALNNVDTNYFAFTQAQSTLSNLQQTHSYNQRITQYYRNRYNAGVSELREWLVAANTEKSSQLAILNAKYQVLQSENAVYSSMAGYYL.

This sequence belongs to the outer membrane factor (OMF) (TC 1.B.17) family.

This is an uncharacterized protein from Haemophilus influenzae (strain ATCC 51907 / DSM 11121 / KW20 / Rd).